The chain runs to 216 residues: Thiopurine S-methyltransferase (216 aa).

S-adenosyl-L-methionine contacts are provided by tryptophan 11, leucine 46, glutamate 67, and arginine 122.

Belongs to the class I-like SAM-binding methyltransferase superfamily. TPMT family.

The protein localises to the cytoplasm. It carries out the reaction S-adenosyl-L-methionine + a thiopurine = S-adenosyl-L-homocysteine + a thiopurine S-methylether.. The protein is Thiopurine S-methyltransferase of Vibrio parahaemolyticus serotype O3:K6 (strain RIMD 2210633).